We begin with the raw amino-acid sequence, 421 residues long: Immunoglobulin heavy constant epsilon (421 aa).

4 consecutive Ig-like domains span residues 5–97, 99–184, 201–301, and 310–410; these read PQLY…VNIT, PTLE…KVTS, PRGV…RSIT, and PEVY…KTIS. The cysteines at positions 23 and 75 are disulfide-linked. N-linked (GlcNAc...) asparagine glycans are attached at residues N43, N72, N84, N95, N166, N238, N261, N365, and N415. 3 disulfides stabilise this stretch: C121/C180, C226/C285, and C330/C392.

The basic structural unit consists of two identical heavy chains and two identical light chains; disulfide-linked. N-terminal variable regions of the heavy and light chains form the antigen binding sites, whereas the C-terminal constant regions of the heavy chains interact with immune receptors to mediate effector functions.

Its subcellular location is the secreted. The protein resides in the cell membrane. Its function is as follows. Constant region of immunoglobulin heavy chains. Immunoglobulins, also known as antibodies, are membrane-bound or secreted glycoproteins produced by B lymphocytes. In the recognition phase of humoral immunity, the membrane-bound immunoglobulins serve as receptors which, upon binding of a specific antigen, trigger the clonal expansion and differentiation of B lymphocytes into immunoglobulins-secreting plasma cells. Secreted immunoglobulins mediate the effector phase of humoral immunity, which results in the elimination of bound antigens. The antigen binding site is formed by the variable domain of one heavy chain, together with that of its associated light chain. Thus, each immunoglobulin has two antigen binding sites with remarkable affinity for a particular antigen. The variable domains are assembled by a process called V-(D)-J rearrangement and can then be subjected to somatic hypermutations which, after exposure to antigen and selection, allow affinity maturation for a particular antigen. The polypeptide is Immunoglobulin heavy constant epsilon (Mus musculus (Mouse)).